A 483-amino-acid chain; its full sequence is Probable glycosyltransferase 4 (483 aa).

Residues 1–26 (MSKLQDRHGGEAAADVGRRARHQRLL) lie on the Cytoplasmic side of the membrane. Residues 27 to 47 (LSFPVFPIVLLLLAPCTIFFF) traverse the membrane as a helical; Signal-anchor for type II membrane protein segment. Residues 48 to 483 (TSGDVPLPRI…KKTSRAARPM (436 aa)) lie on the Lumenal side of the membrane. Positions 71–119 (AVAADTSPPPPSPPSSSPPPLSFPPPPPPPSSPPPPALPVVDDHSDTQR) are disordered. The span at 77–108 (SPPPPSPPSSSPPPLSFPPPPPPPSSPPPPAL) shows a compositional bias: pro residues. An N-linked (GlcNAc...) asparagine glycan is attached at Asn-448.

This sequence belongs to the glycosyltransferase 34 family.

It is found in the golgi apparatus membrane. Functionally, probable glycosyltransferase that may be involved in the biosynthesis of xyloglucan. The sequence is that of Probable glycosyltransferase 4 from Oryza sativa subsp. indica (Rice).